Consider the following 265-residue polypeptide: Zinc transporter ZupT (265 aa).

8 consecutive transmembrane segments (helical) span residues 6–26, 37–57, 77–97, 122–142, 150–170, 184–204, 208–228, and 245–265; these read IAFA…GGAL, FMAA…FMEI, WTMM…DRLV, GMFT…ATFL, IAIP…IAVA, FWWA…GFAL, FIGP…MVFI, and CAIY…ALFI. The Fe(2+) site is built by Asn133 and Glu136. Residues Glu136 and His161 each contribute to the Zn(2+) site. The Fe(2+) site is built by Asn162, Glu165, and Glu194. Glu165 lines the Zn(2+) pocket.

This sequence belongs to the ZIP transporter (TC 2.A.5) family. ZupT subfamily.

It localises to the cell membrane. The enzyme catalyses Zn(2+)(in) = Zn(2+)(out). In terms of biological role, mediates zinc uptake. May also transport other divalent cations. The chain is Zinc transporter ZupT from Corynebacterium aurimucosum (strain ATCC 700975 / DSM 44827 / CIP 107346 / CN-1) (Corynebacterium nigricans).